A 300-amino-acid chain; its full sequence is MNFQGLVLTDNCKNQWVVGPLIGKGGFGSIYTTNDNNYVVKIEPKANGSLFTEQAFYTRVLKPSVIEEWKKSHNIKHVGLITCKAFGLYKSINVEYRFLVINRLGADLDAVIRANNNRLPKRSVMLIGIEILNTIQFMHEQGYSHGDIKASNIVLDQIDKNKLYLVDYGLVSKFMSNGEHVPFIRNPNKMDNGTLEFTPIDSHKGYVVSRRGDLETLGYCMIRWLGGILPWTKISETKNCALVSATKQKYVNNTATLLMTSLQYAPRELLQYITMVNSLTYFEEPNYDEFRHILMQGVYY.

In terms of domain architecture, Protein kinase spans W16–F282. ATP-binding positions include I22–I30 and K45. D147 (proton acceptor) is an active-site residue.

The protein belongs to the protein kinase superfamily. Ser/Thr protein kinase family. Poxviruses subfamily. As to quaternary structure, interacts with host JIP1; this interaction increases the amount of MAPK bound to JIP1 and subsequently increases the activity of transcription factors, such as JUN, that respond to these complexes. Interacts with protein OPG198; this interaction inhibits the repressive activity of OPG198 pseudokinase on viral replication factory formation. Requires Mg(2+) as cofactor. Post-translationally, autophosphorylated.

It is found in the virion. It localises to the host cytoplasm. It carries out the reaction L-seryl-[protein] + ATP = O-phospho-L-seryl-[protein] + ADP + H(+). The catalysed reaction is L-threonyl-[protein] + ATP = O-phospho-L-threonyl-[protein] + ADP + H(+). Functionally, essential serine/threonine-protein kinase that plays different role in the viral life cycle. Phosphorylates the host small ribosomal protein RACK1 thereby customizing the ribosomes to a state optimal for viral mRNAs (which contain poly-A leaders) but not for host mRNAs. Facilitates viral DNA replication by inhibiting host BANF1, a cellular host defense responsive to foreign DNA. Phosphorylates host BANF1 on serine and threonine residues; this leads to BANF1 relocalization to the cytoplasm, loss of dimerization and impaired DNA binding activity. Indeed, BANF1 activity depends on its DNA-binding property which is blocked by VPK1-mediated phosphorylation. Required for viral intermediate genes expression, probably by inhibiting host BANF1. Modulates cellular responses via host JUN by two different mechanisms, either by direct phosphorylation or by modulation of upstream JIP1-MAPK complexes. Seems to participate in the accumulation/processing of late proteins and thus in virion maturation. In addition, inhibits B12 repressive activity on viral DNA replication via a phosphorylation-dependent mechanism. In Bos taurus (Bovine), this protein is B1 kinase (OPG187).